Consider the following 141-residue polypeptide: Prefoldin subunit alpha (141 aa).

It belongs to the prefoldin subunit alpha family. Heterohexamer of two alpha and four beta subunits.

It is found in the cytoplasm. Functionally, molecular chaperone capable of stabilizing a range of proteins. Seems to fulfill an ATP-independent, HSP70-like function in archaeal de novo protein folding. This is Prefoldin subunit alpha (pfdA) from Methanothermobacter thermautotrophicus (strain ATCC 29096 / DSM 1053 / JCM 10044 / NBRC 100330 / Delta H) (Methanobacterium thermoautotrophicum).